Reading from the N-terminus, the 195-residue chain is Large ribosomal subunit protein bL17 (195 aa).

The interval 132–195 is disordered; that stretch reads ARGTRFAARK…TEAKDTKPES (64 aa). The segment covering 159–186 has biased composition (low complexity); that stretch reads PTAAAVAAEAQAEQPTAEAVAADDAATT.

Belongs to the bacterial ribosomal protein bL17 family. Part of the 50S ribosomal subunit. Contacts protein L32.

This is Large ribosomal subunit protein bL17 from Parafrankia sp. (strain EAN1pec).